Consider the following 355-residue polypeptide: MRVADFTFELPESLIAHYPQAERSGCRLLSLNGSDGALTHGVFTDLLHKLNPGDLLVFNNTRVIPARIFGRKASGGKIEVLVERMLDDTRVLAHVRSSKAPKPGSDLLLGDDESVQATMLARHDTLFEIEFNDARPVLDILNSIGHMPLPPYIDRPDEDADRELYQTVYSQKPGAVAAPTAGLHFDEPLLVALREKGIETAFVTLHVGAGTFQPVRVDTIEDHIMHAEYAEVPQDVVDAVLACKARGNRVIAVGTTSVRSLESAAQAAENTLIAPFFGDTKIFIYPGYHYQVIDALVTNFHLPESTLIMLVSAFAGYKHTMRAYQQAVAEQYRFFSYGDAMFITRNPQAFAEIPG.

This sequence belongs to the QueA family. Monomer.

It is found in the cytoplasm. The enzyme catalyses 7-aminomethyl-7-carbaguanosine(34) in tRNA + S-adenosyl-L-methionine = epoxyqueuosine(34) in tRNA + adenine + L-methionine + 2 H(+). It functions in the pathway tRNA modification; tRNA-queuosine biosynthesis. Its function is as follows. Transfers and isomerizes the ribose moiety from AdoMet to the 7-aminomethyl group of 7-deazaguanine (preQ1-tRNA) to give epoxyqueuosine (oQ-tRNA). This is S-adenosylmethionine:tRNA ribosyltransferase-isomerase from Erwinia tasmaniensis (strain DSM 17950 / CFBP 7177 / CIP 109463 / NCPPB 4357 / Et1/99).